Consider the following 233-residue polypeptide: Ribonuclease HII (233 aa).

One can recognise an RNase H type-2 domain in the interval 21-211 (KVIAGVDEVG…LDALPQWRHL (191 aa)). 3 residues coordinate a divalent metal cation: Asp27, Glu28, and Asp119.

Belongs to the RNase HII family. The cofactor is Mn(2+). Mg(2+) is required as a cofactor.

The protein resides in the cytoplasm. It carries out the reaction Endonucleolytic cleavage to 5'-phosphomonoester.. Its function is as follows. Endonuclease that specifically degrades the RNA of RNA-DNA hybrids. The sequence is that of Ribonuclease HII from Streptomyces avermitilis (strain ATCC 31267 / DSM 46492 / JCM 5070 / NBRC 14893 / NCIMB 12804 / NRRL 8165 / MA-4680).